The sequence spans 250 residues: Shieldin complex subunit 3 (250 aa).

Residues 28–83 (QDFPTRPLSRFIPWFPYDGSKLPLRPKRSPPVISEEAAEDVKQYLTISEHDAKSHS) form a sufficient for interaction with MAD2L2 region. Positions 108–119 (LKEQTNSGNLGK) are enriched in polar residues. A disordered region spans residues 108-129 (LKEQTNSGNLGKQSEKGKQHKR).

In terms of assembly, component of the shieldin complex, consisting of SHLD1, SHLD2, SHLD3 and MAD2L2/REV7. Within the complex, SHLD2 forms a scaffold which interacts with a SHLD3-MAD2L2 subcomplex via its N-terminus, and with SHLD1 via its C-terminus. Interacts with ASTE1.

The protein resides in the chromosome. In terms of biological role, component of the shieldin complex, which plays an important role in repair of DNA double-stranded breaks (DSBs). During G1 and S phase of the cell cycle, the complex functions downstream of TP53BP1 to promote non-homologous end joining (NHEJ) and suppress DNA end resection. Mediates various NHEJ-dependent processes including immunoglobulin class-switch recombination, and fusion of unprotected telomeres. The chain is Shieldin complex subunit 3 from Homo sapiens (Human).